Consider the following 187-residue polypeptide: UPF0301 protein BCI_0481 (187 aa).

Belongs to the UPF0301 (AlgH) family.

In Baumannia cicadellinicola subsp. Homalodisca coagulata, this protein is UPF0301 protein BCI_0481.